The primary structure comprises 71 residues: High-potential iron-sulfur protein (71 aa).

Position 1 is a pyrrolidone carboxylic acid (Gln-1). [4Fe-4S] cluster is bound by residues Cys-37, Cys-40, Cys-50, and Cys-64.

This sequence belongs to the high-potential iron-sulfur protein (HiPIP) family. In terms of assembly, homodimer.

In terms of biological role, specific class of high-redox-potential 4Fe-4S ferredoxins. Functions in anaerobic electron transport in most purple and in some other photosynthetic bacteria and in at least one genus (Paracoccus) of halophilic, denitrifying bacteria. The chain is High-potential iron-sulfur protein (hip) from Halomonas halodenitrificans (strain ATCC 12084 / NCIMB 8669) (Paracoccus halodenitrificans).